The chain runs to 588 residues: Aspartate--tRNA ligase (588 aa).

L-aspartate is bound at residue glutamate 172. The aspartate stretch occupies residues 196-199; it reads QLFK. Residue arginine 218 participates in L-aspartate binding. ATP contacts are provided by residues 218 to 220 and glutamine 227; that span reads RDE. Histidine 449 lines the L-aspartate pocket. Residue glutamate 483 coordinates ATP. Residue arginine 490 coordinates L-aspartate. 535–538 serves as a coordination point for ATP; the sequence is GLDR.

It belongs to the class-II aminoacyl-tRNA synthetase family. Type 1 subfamily. In terms of assembly, homodimer.

It is found in the cytoplasm. The enzyme catalyses tRNA(Asp) + L-aspartate + ATP = L-aspartyl-tRNA(Asp) + AMP + diphosphate. In terms of biological role, catalyzes the attachment of L-aspartate to tRNA(Asp) in a two-step reaction: L-aspartate is first activated by ATP to form Asp-AMP and then transferred to the acceptor end of tRNA(Asp). This Pasteurella multocida (strain Pm70) protein is Aspartate--tRNA ligase.